The sequence spans 178 residues: Actin-related protein 2/3 complex subunit 3-A (178 aa).

The protein belongs to the ARPC3 family. In terms of assembly, component of the Arp2/3 complex composed of actr2/arp2, actr3/arp3, arpc1 (arpc1a or arpc1b), arpc2, arpc3, arpc4 and arpc5.

The protein resides in the cytoplasm. It localises to the cytoskeleton. The protein localises to the cell projection. It is found in the nucleus. Its function is as follows. Component of the Arp2/3 complex, a multiprotein complex that mediates actin polymerization upon stimulation by nucleation-promoting factor (NPF). The Arp2/3 complex mediates the formation of branched actin networks in the cytoplasm, providing the force for cell motility. In addition to its role in the cytoplasmic cytoskeleton, the Arp2/3 complex also promotes actin polymerization in the nucleus, thereby regulating gene transcription and repair of damaged DNA. The Arp2/3 complex promotes homologous recombination (HR) repair in response to DNA damage by promoting nuclear actin polymerization, leading to drive motility of double-strand breaks (DSBs). The polypeptide is Actin-related protein 2/3 complex subunit 3-A (arpc3-a) (Xenopus laevis (African clawed frog)).